The chain runs to 397 residues: CCA-adding enzyme (397 aa).

ATP-binding residues include G26 and R29. Residues G26 and R29 each contribute to the CTP site. Mg(2+) contacts are provided by D39 and D41. ATP-binding residues include R110, D153, R156, R159, and R162. R110, D153, R156, R159, and R162 together coordinate CTP.

Belongs to the tRNA nucleotidyltransferase/poly(A) polymerase family. Bacterial CCA-adding enzyme type 3 subfamily. Homodimer. The cofactor is Mg(2+).

It catalyses the reaction a tRNA precursor + 2 CTP + ATP = a tRNA with a 3' CCA end + 3 diphosphate. It carries out the reaction a tRNA with a 3' CCA end + 2 CTP + ATP = a tRNA with a 3' CCACCA end + 3 diphosphate. In terms of biological role, catalyzes the addition and repair of the essential 3'-terminal CCA sequence in tRNAs without using a nucleic acid template. Adds these three nucleotides in the order of C, C, and A to the tRNA nucleotide-73, using CTP and ATP as substrates and producing inorganic pyrophosphate. tRNA 3'-terminal CCA addition is required both for tRNA processing and repair. Also involved in tRNA surveillance by mediating tandem CCA addition to generate a CCACCA at the 3' terminus of unstable tRNAs. While stable tRNAs receive only 3'-terminal CCA, unstable tRNAs are marked with CCACCA and rapidly degraded. This chain is CCA-adding enzyme, found in Bacillus thuringiensis subsp. konkukian (strain 97-27).